Here is a 98-residue protein sequence, read N- to C-terminus: Aspartyl/glutamyl-tRNA(Asn/Gln) amidotransferase subunit C (98 aa).

It belongs to the GatC family. Heterotrimer of A, B and C subunits.

It carries out the reaction L-glutamyl-tRNA(Gln) + L-glutamine + ATP + H2O = L-glutaminyl-tRNA(Gln) + L-glutamate + ADP + phosphate + H(+). It catalyses the reaction L-aspartyl-tRNA(Asn) + L-glutamine + ATP + H2O = L-asparaginyl-tRNA(Asn) + L-glutamate + ADP + phosphate + 2 H(+). Functionally, allows the formation of correctly charged Asn-tRNA(Asn) or Gln-tRNA(Gln) through the transamidation of misacylated Asp-tRNA(Asn) or Glu-tRNA(Gln) in organisms which lack either or both of asparaginyl-tRNA or glutaminyl-tRNA synthetases. The reaction takes place in the presence of glutamine and ATP through an activated phospho-Asp-tRNA(Asn) or phospho-Glu-tRNA(Gln). The protein is Aspartyl/glutamyl-tRNA(Asn/Gln) amidotransferase subunit C of Roseiflexus castenholzii (strain DSM 13941 / HLO8).